Reading from the N-terminus, the 325-residue chain is Lipoyl synthase (325 aa).

Positions 66, 71, 77, 92, 96, 99, and 303 each coordinate [4Fe-4S] cluster. Residues 78–292 enclose the Radical SAM core domain; it reads WEDREATFLI…AQFAEGLGFA (215 aa).

It belongs to the radical SAM superfamily. Lipoyl synthase family. [4Fe-4S] cluster is required as a cofactor.

Its subcellular location is the cytoplasm. The enzyme catalyses [[Fe-S] cluster scaffold protein carrying a second [4Fe-4S](2+) cluster] + N(6)-octanoyl-L-lysyl-[protein] + 2 oxidized [2Fe-2S]-[ferredoxin] + 2 S-adenosyl-L-methionine + 4 H(+) = [[Fe-S] cluster scaffold protein] + N(6)-[(R)-dihydrolipoyl]-L-lysyl-[protein] + 4 Fe(3+) + 2 hydrogen sulfide + 2 5'-deoxyadenosine + 2 L-methionine + 2 reduced [2Fe-2S]-[ferredoxin]. It participates in protein modification; protein lipoylation via endogenous pathway; protein N(6)-(lipoyl)lysine from octanoyl-[acyl-carrier-protein]: step 2/2. In terms of biological role, catalyzes the radical-mediated insertion of two sulfur atoms into the C-6 and C-8 positions of the octanoyl moiety bound to the lipoyl domains of lipoate-dependent enzymes, thereby converting the octanoylated domains into lipoylated derivatives. The protein is Lipoyl synthase of Mycobacterium sp. (strain JLS).